Consider the following 269-residue polypeptide: Adenosylcobinamide-GDP ribazoletransferase (269 aa).

6 helical membrane passes run 63–83 (SAYY…LLYL), 87–107 (LPPG…TGML), 137–157 (VGAF…SLLG), 158–178 (AGLP…VVLM), 202–222 (LAFL…AALV), and 246–266 (VYGL…GWGF).

It belongs to the CobS family. Mg(2+) serves as cofactor.

Its subcellular location is the cell membrane. The enzyme catalyses alpha-ribazole + adenosylcob(III)inamide-GDP = adenosylcob(III)alamin + GMP + H(+). It catalyses the reaction alpha-ribazole 5'-phosphate + adenosylcob(III)inamide-GDP = adenosylcob(III)alamin 5'-phosphate + GMP + H(+). Its pathway is cofactor biosynthesis; adenosylcobalamin biosynthesis; adenosylcobalamin from cob(II)yrinate a,c-diamide: step 7/7. Joins adenosylcobinamide-GDP and alpha-ribazole to generate adenosylcobalamin (Ado-cobalamin). Also synthesizes adenosylcobalamin 5'-phosphate from adenosylcobinamide-GDP and alpha-ribazole 5'-phosphate. This is Adenosylcobinamide-GDP ribazoletransferase from Deinococcus radiodurans (strain ATCC 13939 / DSM 20539 / JCM 16871 / CCUG 27074 / LMG 4051 / NBRC 15346 / NCIMB 9279 / VKM B-1422 / R1).